The chain runs to 130 residues: Small ribosomal subunit protein uS11 (130 aa).

This sequence belongs to the universal ribosomal protein uS11 family. Part of the 30S ribosomal subunit. Interacts with proteins S7 and S18. Binds to IF-3.

Its function is as follows. Located on the platform of the 30S subunit, it bridges several disparate RNA helices of the 16S rRNA. Forms part of the Shine-Dalgarno cleft in the 70S ribosome. This Prochlorococcus marinus (strain MIT 9303) protein is Small ribosomal subunit protein uS11.